A 396-amino-acid polypeptide reads, in one-letter code: MSRLARLREQLSTRDHFCDGWLLVATLSLMLIGWVMVTSASTEVATSLTGNPWYFSVRHGVFVLCSMVVALLVLRIPMAWWKANGPLLLLVGLALLALVLVAGREVNGSRRWLSVPGIPLNLQASEIAKLCLIVYLAGYLERFLPQVRRHWGAFLRPLMVMAVMGVLLIFEPDYGAVVVMTGCVMGMLLMAGAPWGRFLLLMGLVAALGAALAIAEPYRMARLTSFVDPWADQFASGYQLTQALIAFGRGEWFGTGLGNSVQKLFYLPEAHTDFVFAVLAEELGMIGAVAVIGLFALLVWRAMAVGRRAELAKRPFAAYLCYGIALVIGAQAFINIAVSTGMLPTKGLTLPLLSYGGSSLVISAVMVGMLLRVDIETRQARRREQPAAPRTGEARS.

9 helical membrane passes run 17–37 (FCDGWLLVATLSLMLIGWVMV), 61–81 (VFVLCSMVVALLVLRIPMAWW), 83–103 (ANGPLLLLVGLALLALVLVAG), 117–137 (GIPLNLQASEIAKLCLIVYLA), 159–179 (MVMAVMGVLLIFEPDYGAVVV), 198–218 (FLLLMGLVAALGAALAIAEPY), 274–294 (FVFAVLAEELGMIGAVAVIGL), 316–336 (FAAYLCYGIALVIGAQAFINI), and 350–370 (LPLLSYGGSSLVISAVMVGML).

The protein belongs to the SEDS family. FtsW subfamily.

The protein resides in the cell inner membrane. The enzyme catalyses [GlcNAc-(1-&gt;4)-Mur2Ac(oyl-L-Ala-gamma-D-Glu-L-Lys-D-Ala-D-Ala)](n)-di-trans,octa-cis-undecaprenyl diphosphate + beta-D-GlcNAc-(1-&gt;4)-Mur2Ac(oyl-L-Ala-gamma-D-Glu-L-Lys-D-Ala-D-Ala)-di-trans,octa-cis-undecaprenyl diphosphate = [GlcNAc-(1-&gt;4)-Mur2Ac(oyl-L-Ala-gamma-D-Glu-L-Lys-D-Ala-D-Ala)](n+1)-di-trans,octa-cis-undecaprenyl diphosphate + di-trans,octa-cis-undecaprenyl diphosphate + H(+). Its pathway is cell wall biogenesis; peptidoglycan biosynthesis. Its function is as follows. Peptidoglycan polymerase that is essential for cell division. The sequence is that of Probable peptidoglycan glycosyltransferase FtsW from Halomonas elongata (strain ATCC 33173 / DSM 2581 / NBRC 15536 / NCIMB 2198 / 1H9).